Here is a 300-residue protein sequence, read N- to C-terminus: Glycerol-3-phosphate dehydrogenase [NAD(P)+] (300 aa).

Residues W11, K33, and K79 each contribute to the NADPH site. Sn-glycerol 3-phosphate contacts are provided by K79, G107, and S109. A111 contributes to the NADPH binding site. Sn-glycerol 3-phosphate is bound by residues K161, D214, S224, R225, and N226. K161 (proton acceptor) is an active-site residue. NADPH is bound at residue R225. NADPH is bound by residues V249 and E251.

It belongs to the NAD-dependent glycerol-3-phosphate dehydrogenase family.

It is found in the cytoplasm. The catalysed reaction is sn-glycerol 3-phosphate + NAD(+) = dihydroxyacetone phosphate + NADH + H(+). It catalyses the reaction sn-glycerol 3-phosphate + NADP(+) = dihydroxyacetone phosphate + NADPH + H(+). It functions in the pathway membrane lipid metabolism; glycerophospholipid metabolism. Functionally, catalyzes the reduction of the glycolytic intermediate dihydroxyacetone phosphate (DHAP) to sn-glycerol 3-phosphate (G3P), the key precursor for phospholipid synthesis. This chain is Glycerol-3-phosphate dehydrogenase [NAD(P)+], found in Campylobacter lari (strain RM2100 / D67 / ATCC BAA-1060).